A 126-amino-acid polypeptide reads, in one-letter code: Protein ApaG (126 aa).

Residues 2 to 126 enclose the ApaG domain; that stretch reads SDSRYKVDVS…FRLAVPGSLH (125 aa).

This is Protein ApaG from Pseudomonas syringae pv. tomato (strain ATCC BAA-871 / DC3000).